Consider the following 147-residue polypeptide: Lysozyme C-1 (147 aa).

The signal sequence occupies residues 1-18 (MKALIILGLLCLSVAVQG). Residues 19–147 (KVFERCELAR…VSSYVEGCSL (129 aa)) enclose the C-type lysozyme domain. 4 disulfides stabilise this stretch: C24–C145, C48–C133, C83–C99, and C95–C113. Active-site residues include E53 and D71.

Belongs to the glycosyl hydrolase 22 family. As to quaternary structure, monomer. As to expression, expressed in stomach.

The protein resides in the secreted. It carries out the reaction Hydrolysis of (1-&gt;4)-beta-linkages between N-acetylmuramic acid and N-acetyl-D-glucosamine residues in a peptidoglycan and between N-acetyl-D-glucosamine residues in chitodextrins.. Lysozymes have primarily a bacteriolytic function; those in tissues and body fluids are associated with the monocyte-macrophage system and enhance the activity of immunoagents. The sequence is that of Lysozyme C-1 from Ovis aries (Sheep).